The chain runs to 589 residues: METSTISFSSSSPPSPPPPQPAPGDIDAVSLGRLSRNLENLLDPAFLNCADAEIVLASGGGDPGGGAVVGVHRCILAARSRFFYDHFSSAPAPAPATAGDKPQLDLDGLVPGGRHIGRDALVAVLSYLYTGRLRSAPPEAAACLDDGCSHDACRPAIDFVVESTYAASGFQISELVSLFQRRLSDFVNKALAEDILPILVVASTCHLPELLNQCIQRVANSNLDNRYLEKRLPDDLYAKLKEFRVPDEPHSGILDPEHEKRVRNIHKALDSDDVDLVGMLLKESPVTLDDAFAIHYAAAYCEPKVLAELLKLESANVNLKNSSGYTPLHMACMRREPDIIVSLIEKGASVLERTQDGRDALTICKRLTREKDRNEKSEKCKERSKAYLCIGVLQQEIKRRPQILEDQMSAEESIATPLLVDNFHMRLLNLENRVAFARIFFPSEAKLVMRIAQADSTQEFAGLTSANFSKLKEVDLNETPTMQNRRLRERLDALTKTVELGRRYFPHCSEVLDKFLNEESTDLILLESGTAEDQQTKRMRFSELREDVRKAFTKDKAAGAAISSSTSASSSPRYETKLRPGNKKGKLSR.

The interval 1-25 (METSTISFSSSSPPSPPPPQPAPGD) is disordered. Pro residues predominate over residues 13–22 (PPSPPPPQPA). In terms of domain architecture, BTB spans 52-137 (AEIVLASGGG…LYTGRLRSAP (86 aa)). The segment at 140 to 154 (AAACLDDGCSHDACR) adopts a C2HC NPR-type zinc-finger fold. 4 residues coordinate Zn(2+): Cys-143, Cys-148, His-150, and Cys-153. ANK repeat units follow at residues 260–290 (KRVR…TLDD), 292–319 (FAIH…NVNL), and 323–352 (SGYT…SVLE). The tract at residues 382–521 (ERSKAYLCIG…LDKFLNEEST (140 aa)) is salicylic acid-binding core (SBC). Residue Arg-433 coordinates salicylate. A disordered region spans residues 555-589 (DKAAGAAISSSTSASSSPRYETKLRPGNKKGKLSR). Residues 558–571 (AGAAISSSTSASSS) show a composition bias toward low complexity. Residues 580–589 (PGNKKGKLSR) are compositionally biased toward basic residues.

It belongs to the plant 'ANKYRIN-BTB/POZ' family. 'NPR1-like' subfamily. Interacts with TGA2.1, TGA2.2, TGA2.3, LG2, TGAL1, TGAL4, NRR, RH1, RH2 and RH3.

It localises to the nucleus. It functions in the pathway protein modification; protein ubiquitination. In terms of biological role, salicylic acid (SA)-binding substrate-specific adapter of an E3 ubiquitin-protein ligase complex (CUL3-RBX1-BTB) which mediates the ubiquitination and subsequent proteasomal degradation of target proteins. Involved in defense response against the bacterial blight disease caused by Xanthomonas oryzae pv. oryzae (Xoo). Plants expressing an NPR3/NH3 transgene driven by its native promoter show enhanced resistance to the Xoo pathogen, and exhibit elevated sensitivity to benzothiadiazole (BTH) treatment and enhanced induction of defense-related genes upon treatment with BTH. Intriguingly, constitutive over-expression of NPR3/NH3 with a ubiquitin promoter does not confer disease resistance to Xoo. This Oryza sativa subsp. japonica (Rice) protein is BTB/POZ domain and ankyrin repeat-containing protein NPR3.